The primary structure comprises 183 residues: uncharacterized protein (183 aa).

Transmembrane regions (helical) follow at residues 13–35, 60–82, 117–139, and 149–171; these read KALL…LTYS, LLIL…KLRF, FEPV…YAIF, and LLFY…LYLS.

Its subcellular location is the cell membrane. This is an uncharacterized protein from Archaeoglobus fulgidus (strain ATCC 49558 / DSM 4304 / JCM 9628 / NBRC 100126 / VC-16).